Consider the following 344-residue polypeptide: Protein pelota homolog (344 aa).

It belongs to the eukaryotic release factor 1 family. Pelota subfamily. As to quaternary structure, monomer. A divalent metal cation is required as a cofactor.

It is found in the cytoplasm. May function in recognizing stalled ribosomes, interact with stem-loop structures in stalled mRNA molecules, and effect endonucleolytic cleavage of the mRNA. May play a role in the release non-functional ribosomes and degradation of damaged mRNAs. Has endoribonuclease activity. The polypeptide is Protein pelota homolog (Saccharolobus islandicus (strain M.16.27) (Sulfolobus islandicus)).